We begin with the raw amino-acid sequence, 256 residues long: Small ribosomal subunit protein eS1 (256 aa).

The residue at position 2 (Ala2) is an N-acetylalanine; partial.

This sequence belongs to the eukaryotic ribosomal protein eS1 family. In terms of assembly, component of the small ribosomal subunit. Mature ribosomes consist of a small (40S) and a large (60S) subunit. The 40S subunit contains about 33 different proteins and 1 molecule of RNA (18S). The 60S subunit contains about 49 different proteins and 3 molecules of RNA (25S, 5.8S and 5S).

The protein resides in the cytoplasm. This chain is Small ribosomal subunit protein eS1, found in Eremothecium gossypii (strain ATCC 10895 / CBS 109.51 / FGSC 9923 / NRRL Y-1056) (Yeast).